A 306-amino-acid chain; its full sequence is Aspartate carbamoyltransferase catalytic subunit (306 aa).

2 residues coordinate carbamoyl phosphate: arginine 55 and threonine 56. Lysine 84 serves as a coordination point for L-aspartate. 3 residues coordinate carbamoyl phosphate: arginine 105, histidine 133, and glutamine 136. 2 residues coordinate L-aspartate: arginine 166 and arginine 227. Carbamoyl phosphate-binding residues include leucine 265 and proline 266.

It belongs to the aspartate/ornithine carbamoyltransferase superfamily. ATCase family. Heterododecamer (2C3:3R2) of six catalytic PyrB chains organized as two trimers (C3), and six regulatory PyrI chains organized as three dimers (R2).

The enzyme catalyses carbamoyl phosphate + L-aspartate = N-carbamoyl-L-aspartate + phosphate + H(+). The protein operates within pyrimidine metabolism; UMP biosynthesis via de novo pathway; (S)-dihydroorotate from bicarbonate: step 2/3. In terms of biological role, catalyzes the condensation of carbamoyl phosphate and aspartate to form carbamoyl aspartate and inorganic phosphate, the committed step in the de novo pyrimidine nucleotide biosynthesis pathway. This is Aspartate carbamoyltransferase catalytic subunit from Aeromonas hydrophila subsp. hydrophila (strain ATCC 7966 / DSM 30187 / BCRC 13018 / CCUG 14551 / JCM 1027 / KCTC 2358 / NCIMB 9240 / NCTC 8049).